Here is a 728-residue protein sequence, read N- to C-terminus: Leucine-rich repeat and calponin homology domain-containing protein 1 (728 aa).

The span at 24–36 shows a compositional bias: basic residues; that stretch reads HHPHHHHHHHQHH. The disordered stretch occupies residues 24-57; it reads HHPHHHHHHHQHHGGTGAPGGAGGGGGGSGGFNL. Residues 37-54 are compositionally biased toward gly residues; that stretch reads GGTGAPGGAGGGGGGSGG. LRR repeat units follow at residues 98 to 119, 121 to 143, 144 to 166, 167 to 187, 189 to 210, 212 to 234, 235 to 255, 257 to 278, and 283 to 304; these read DTVQ…LCHF, SLEI…VNLQ, MLTY…CGLP, LKVL…IGQL, QLME…IGQL, SLRE…VDLS, LVKF…FREM, QLQV…ICTK, and IFKY…YLHT. The segment covering 311 to 322 has biased composition (basic and acidic residues); sequence HQHVEDGKKDSD. The interval 311 to 348 is disordered; sequence HQHVEDGKKDSDSGVGSDNGDKRLSATEPSDEDTVSLN. At Ser-370 the chain carries Phosphoserine. A disordered region spans residues 377 to 398; the sequence is HQEFQPEPSLLGDSTNSGEERD. Ser-409 carries the post-translational modification Phosphoserine. The span at 516 to 525 shows a compositional bias: polar residues; sequence LQSNGSQYSP. The tract at residues 516-547 is disordered; the sequence is LQSNGSQYSPNEIRENSPAVSPTTNSTAPFGL. 2 positions are modified to phosphoserine: Ser-532 and Ser-536. The span at 533–543 shows a compositional bias: polar residues; the sequence is PAVSPTTNSTA. Residue Thr-568 is modified to Phosphothreonine. The region spanning 576–692 is the Calponin-homology (CH) domain; the sequence is MREEKELVEQ…TLLALGEKAP (117 aa).

Interacts (via LRR repeats) with unphosphorylated DOCK8 (via DHR-2 domain); the interaction prevents the interaction between DOCK8 and CDC42.

Its subcellular location is the cytoplasm. Its function is as follows. Acts as a negative regulator of GTPase CDC42 by sequestering CDC42-guanine exchange factor DOCK8. Probably by preventing CDC42 activation, negatively regulates CD4(+) T-cell migration. The sequence is that of Leucine-rich repeat and calponin homology domain-containing protein 1 (LRCH1) from Homo sapiens (Human).